Here is a 110-residue protein sequence, read N- to C-terminus: Phosphoribosyl-ATP pyrophosphatase (110 aa).

Belongs to the PRA-PH family.

The protein localises to the cytoplasm. It catalyses the reaction 1-(5-phospho-beta-D-ribosyl)-ATP + H2O = 1-(5-phospho-beta-D-ribosyl)-5'-AMP + diphosphate + H(+). The protein operates within amino-acid biosynthesis; L-histidine biosynthesis; L-histidine from 5-phospho-alpha-D-ribose 1-diphosphate: step 2/9. The chain is Phosphoribosyl-ATP pyrophosphatase from Pseudomonas fluorescens (strain ATCC BAA-477 / NRRL B-23932 / Pf-5).